The following is a 461-amino-acid chain: Bifunctional protein GlmU (461 aa).

The tract at residues 1-229 (MNKYVVILAA…FSESLGVNDR (229 aa)) is pyrophosphorylase. Residues 8 to 11 (LAAG), Lys-22, Gln-72, and 77 to 78 (GT) each bind UDP-N-acetyl-alpha-D-glucosamine. Asp-102 lines the Mg(2+) pocket. UDP-N-acetyl-alpha-D-glucosamine contacts are provided by Gly-139, Glu-154, Asn-169, and Asn-227. Asn-227 is a Mg(2+) binding site. Residues 230–250 (IALAQATKIMQRRINEEHMRN) are linker. The interval 251–461 (GVSFIDPDTA…LPLAKDKEWE (211 aa)) is N-acetyltransferase. The UDP-N-acetyl-alpha-D-glucosamine site is built by Arg-332 and Lys-350. Residue His-362 is the Proton acceptor of the active site. 2 residues coordinate UDP-N-acetyl-alpha-D-glucosamine: Tyr-365 and Asn-376. Residues 385–386 (NY), Ala-422, and Arg-439 contribute to the acetyl-CoA site.

This sequence in the N-terminal section; belongs to the N-acetylglucosamine-1-phosphate uridyltransferase family. The protein in the C-terminal section; belongs to the transferase hexapeptide repeat family. As to quaternary structure, homotrimer. Mg(2+) serves as cofactor.

It is found in the cytoplasm. It catalyses the reaction alpha-D-glucosamine 1-phosphate + acetyl-CoA = N-acetyl-alpha-D-glucosamine 1-phosphate + CoA + H(+). The enzyme catalyses N-acetyl-alpha-D-glucosamine 1-phosphate + UTP + H(+) = UDP-N-acetyl-alpha-D-glucosamine + diphosphate. It functions in the pathway nucleotide-sugar biosynthesis; UDP-N-acetyl-alpha-D-glucosamine biosynthesis; N-acetyl-alpha-D-glucosamine 1-phosphate from alpha-D-glucosamine 6-phosphate (route II): step 2/2. It participates in nucleotide-sugar biosynthesis; UDP-N-acetyl-alpha-D-glucosamine biosynthesis; UDP-N-acetyl-alpha-D-glucosamine from N-acetyl-alpha-D-glucosamine 1-phosphate: step 1/1. The protein operates within bacterial outer membrane biogenesis; LPS lipid A biosynthesis. Its function is as follows. Catalyzes the last two sequential reactions in the de novo biosynthetic pathway for UDP-N-acetylglucosamine (UDP-GlcNAc). The C-terminal domain catalyzes the transfer of acetyl group from acetyl coenzyme A to glucosamine-1-phosphate (GlcN-1-P) to produce N-acetylglucosamine-1-phosphate (GlcNAc-1-P), which is converted into UDP-GlcNAc by the transfer of uridine 5-monophosphate (from uridine 5-triphosphate), a reaction catalyzed by the N-terminal domain. The sequence is that of Bifunctional protein GlmU from Lactobacillus johnsonii (strain CNCM I-12250 / La1 / NCC 533).